A 400-amino-acid polypeptide reads, in one-letter code: Acetate kinase (400 aa).

Residue Asn10 coordinates Mg(2+). Lys17 is an ATP binding site. Arg91 lines the substrate pocket. The Proton donor/acceptor role is filled by Asp150. ATP is bound by residues 210 to 214 (HLGNG), 285 to 287 (DCR), and 333 to 337 (GIGEN). Glu387 provides a ligand contact to Mg(2+).

Belongs to the acetokinase family. In terms of assembly, homodimer. The cofactor is Mg(2+). Mn(2+) serves as cofactor.

It is found in the cytoplasm. It carries out the reaction acetate + ATP = acetyl phosphate + ADP. Its pathway is metabolic intermediate biosynthesis; acetyl-CoA biosynthesis; acetyl-CoA from acetate: step 1/2. Its function is as follows. Catalyzes the formation of acetyl phosphate from acetate and ATP. Can also catalyze the reverse reaction. This is Acetate kinase from Yersinia pseudotuberculosis serotype I (strain IP32953).